A 369-amino-acid polypeptide reads, in one-letter code: MRIASFFTVLLTLLTLNITPASAERIRDLVNIQGVRGNALIGYGLVVGLDGSGDQTMQTPFTTQSLTNMLSQLGITVPAGTNMQLKNVAAVMVTAELPPFGRTGQNIDIVVSSLGNAKSLRGGTLLMTPLKGVDNQVYALAQGNVLVGGAGASAGGSSVQVNQLAGGRISNGAVIERELPSTFGTSNTIMLQLKNDDFSMAQKVSDAINRSGYGGTASPLDSRTIQVLAPHGNSSQVRFLADVQNIEVNVGIQDAKVVINSRTGSVVMNRDVTLDSCAIAQGNLSVTINQQANVSQPNTPFGGGQTVVTPQTEISVQQTGGVLQRVNSSANLNNVVRALNSLGATPMELMSILQAMQSAGCLRAKLEII.

Residues 1-23 form the signal peptide; it reads MRIASFFTVLLTLLTLNITPASA.

Belongs to the FlgI family. The basal body constitutes a major portion of the flagellar organelle and consists of four rings (L,P,S, and M) mounted on a central rod.

The protein resides in the periplasm. It localises to the bacterial flagellum basal body. In terms of biological role, assembles around the rod to form the L-ring and probably protects the motor/basal body from shearing forces during rotation. This chain is Flagellar P-ring protein, found in Pectobacterium atrosepticum (strain SCRI 1043 / ATCC BAA-672) (Erwinia carotovora subsp. atroseptica).